Consider the following 475-residue polypeptide: Aminodeoxychorismate synthase component 1 (475 aa).

This sequence belongs to the anthranilate synthase component I family. In terms of assembly, monomer. Heterodimer consisting of two non-identical subunits: a glutamine amidotransferase subunit (PabA) and a aminodeoxychorismate synthase subunit (PabB). It depends on Mg(2+) as a cofactor.

It catalyses the reaction chorismate + L-glutamine = 4-amino-4-deoxychorismate + L-glutamate. The protein operates within cofactor biosynthesis; tetrahydrofolate biosynthesis; 4-aminobenzoate from chorismate: step 1/2. Part of a heterodimeric complex that catalyzes the two-step biosynthesis of 4-amino-4-deoxychorismate (ADC), a precursor of p-aminobenzoate (PABA) and tetrahydrofolate. In the first step, a glutamine amidotransferase (PabA) generates ammonia as a substrate that, along with chorismate, is used in the second step, catalyzed by aminodeoxychorismate synthase (PabB) to produce ADC. The chain is Aminodeoxychorismate synthase component 1 (pabB) from Streptomyces lividans.